We begin with the raw amino-acid sequence, 157 residues long: SsrA-binding protein (157 aa).

A disordered region spans residues 132 to 157; sequence EHDKRDTIKEREGKREVERAMKSRHR.

This sequence belongs to the SmpB family.

It localises to the cytoplasm. Functionally, required for rescue of stalled ribosomes mediated by trans-translation. Binds to transfer-messenger RNA (tmRNA), required for stable association of tmRNA with ribosomes. tmRNA and SmpB together mimic tRNA shape, replacing the anticodon stem-loop with SmpB. tmRNA is encoded by the ssrA gene; the 2 termini fold to resemble tRNA(Ala) and it encodes a 'tag peptide', a short internal open reading frame. During trans-translation Ala-aminoacylated tmRNA acts like a tRNA, entering the A-site of stalled ribosomes, displacing the stalled mRNA. The ribosome then switches to translate the ORF on the tmRNA; the nascent peptide is terminated with the 'tag peptide' encoded by the tmRNA and targeted for degradation. The ribosome is freed to recommence translation, which seems to be the essential function of trans-translation. This Paracidovorax citrulli (strain AAC00-1) (Acidovorax citrulli) protein is SsrA-binding protein.